The sequence spans 135 residues: Large ribosomal subunit protein uL16c (135 aa).

Over residues 1 to 17 (MLSPKRTRFRKQHRGRM) the composition is skewed to basic residues. The disordered stretch occupies residues 1–21 (MLSPKRTRFRKQHRGRMKGVS).

The protein belongs to the universal ribosomal protein uL16 family. In terms of assembly, part of the 50S ribosomal subunit.

The protein localises to the plastid. Its subcellular location is the chloroplast. In Amborella trichopoda, this protein is Large ribosomal subunit protein uL16c.